We begin with the raw amino-acid sequence, 422 residues long: Hexuronate transporter (422 aa).

The next 11 membrane-spanning stretches (helical) occupy residues 9-29, 45-65, 82-102, 141-161, 163-183, 219-239, 256-276, 294-314, 321-341, 356-376, and 381-401; these read VILFLFLAGVINYLDRSALSI, MGLIFSSFSIGYAIFNFLGGV, VWSLFSGAVALAFGFVSLLII, TPLGGAISGPIVGMIAVAFSW, VSFVLIMIIGLIWAVLWFKFV, LFTAFAFFAYNYILFFFLTWF, VITVIPWILGFIGLAAGGFVS, VVLVTCLFSSAVLIGFAGLVA, TLVALSVFFLYLTGAIYWAVI, FMHFLANTAGIIGPALTGFIV, and TFSGAFLLAGGLAVFASLAVI.

The protein belongs to the major facilitator superfamily. Phthalate permease family.

The protein localises to the cell membrane. It catalyses the reaction aldehydo-D-glucuronate(in) + H(+)(in) = aldehydo-D-glucuronate(out) + H(+)(out). The enzyme catalyses aldehydo-D-galacturonate(out) + H(+)(out) = aldehydo-D-galacturonate(in) + H(+)(in). Its function is as follows. Transport of aldohexuronates such as D-glucuronate and D-galacturonate. In Bacillus subtilis (strain 168), this protein is Hexuronate transporter.